We begin with the raw amino-acid sequence, 505 residues long: Maturase K (505 aa).

This sequence belongs to the intron maturase 2 family. MatK subfamily.

Its subcellular location is the plastid. The protein resides in the chloroplast. In terms of biological role, usually encoded in the trnK tRNA gene intron. Probably assists in splicing its own and other chloroplast group II introns. The protein is Maturase K of Allamanda cathartica (Yellow allamanda).